Reading from the N-terminus, the 201-residue chain is Small ribosomal subunit protein uS4B (201 aa).

The region spanning 93–156 (QRLDTVVYRL…RSLAVVRESL (64 aa)) is the S4 RNA-binding domain.

The protein belongs to the universal ribosomal protein uS4 family. Part of the 30S ribosomal subunit. Contacts protein S5. The interaction surface between S4 and S5 is involved in control of translational fidelity.

In terms of biological role, one of the primary rRNA binding proteins, it binds directly to 16S rRNA where it nucleates assembly of the body of the 30S subunit. Its function is as follows. With S5 and S12 plays an important role in translational accuracy. The protein is Small ribosomal subunit protein uS4B of Symbiobacterium thermophilum (strain DSM 24528 / JCM 14929 / IAM 14863 / T).